The chain runs to 316 residues: Nucleoprotein (316 aa).

RNA is bound by residues Tyr43, Tyr46, Val76, Arg122, and Lys240.

The protein belongs to the tenuiviruses nucleocapsid protein family.

Its subcellular location is the virion. It localises to the host cytoplasm. Functionally, encapsidates the genome, protecting it from nucleases. The encapsidated genomic RNA is termed the nucleocapsid (NC), and serves as template for viral transcription and replication. This Maize stripe virus (MStV) protein is Nucleoprotein.